The primary structure comprises 328 residues: UPF0285 protein MJ1370 (328 aa).

The protein belongs to the UPF0285 family.

This Methanocaldococcus jannaschii (strain ATCC 43067 / DSM 2661 / JAL-1 / JCM 10045 / NBRC 100440) (Methanococcus jannaschii) protein is UPF0285 protein MJ1370.